Reading from the N-terminus, the 254-residue chain is MMLAKRIIPCLDVHEGRVVKGTNFVNLRDAGDPVELAALYDREGADELVFLDISASAEGRETMVEVVRRTAEQVFIPFTIGGGLRRVEDIRKMLRAGADKVSLNTSAVQTPGLIEEGAHAFGSQCIVVAIDARQTRPGAWEVYIHGGRTPTGKDVLQWAEEVERLGAGEILLTSMNRDGTKNGYDLELTRAVSRAVSLPVIASGGVGTLEHLAEGLTIGEADAVLAASIFHYQEYSIGEAKAYLEERGIPVRKG.

Active-site residues include Asp12 and Asp131.

This sequence belongs to the HisA/HisF family. Heterodimer of HisH and HisF.

The protein resides in the cytoplasm. It carries out the reaction 5-[(5-phospho-1-deoxy-D-ribulos-1-ylimino)methylamino]-1-(5-phospho-beta-D-ribosyl)imidazole-4-carboxamide + L-glutamine = D-erythro-1-(imidazol-4-yl)glycerol 3-phosphate + 5-amino-1-(5-phospho-beta-D-ribosyl)imidazole-4-carboxamide + L-glutamate + H(+). It functions in the pathway amino-acid biosynthesis; L-histidine biosynthesis; L-histidine from 5-phospho-alpha-D-ribose 1-diphosphate: step 5/9. Functionally, IGPS catalyzes the conversion of PRFAR and glutamine to IGP, AICAR and glutamate. The HisF subunit catalyzes the cyclization activity that produces IGP and AICAR from PRFAR using the ammonia provided by the HisH subunit. This chain is Imidazole glycerol phosphate synthase subunit HisF, found in Desulfitobacterium hafniense (strain Y51).